The following is a 93-amino-acid chain: Precursor of CEP13 (93 aa).

A signal peptide spans 1-27; the sequence is MARPRISISMICLLILIVGFVLQSSQA. Residues 28 to 78 constitute a propeptide that is removed on maturation; sequence RKVLVPYGTSKGLFLSALPKGNVPPSGPSDKGHTSPPDDTDQRMVPENSPE. The tract at residues 45 to 93 is disordered; it reads LPKGNVPPSGPSDKGHTSPPDDTDQRMVPENSPEIYRRLESVPSPGVGH. 2 positions are modified to hydroxyproline: P87 and P89.

The protein belongs to the C-terminally encoded plant signaling peptide (CEP) family. As to quaternary structure, interacts with CEP receptors (e.g. CEPR1 and CEPR2). Post-translationally, the mature small signaling peptide is generated by proteolytic processing of the longer precursor.

It is found in the secreted. The protein localises to the extracellular space. The protein resides in the apoplast. Functionally, extracellular signaling peptide that may regulate primary root growth rate and systemic nitrogen (N)-demand signaling. The protein is Precursor of CEP13 of Arabidopsis thaliana (Mouse-ear cress).